Reading from the N-terminus, the 681-residue chain is Heat shock 70 kDa protein (681 aa).

Gly residues predominate over residues 655–665 (NFPGGMPGAGM). Residues 655-681 (NFPGGMPGAGMPGNAPAGSGPTVEEVD) form a disordered region. A compositionally biased stretch (low complexity) spans 666 to 675 (PGNAPAGSGP).

It belongs to the heat shock protein 70 family.

This chain is Heat shock 70 kDa protein, found in Plasmodium falciparum.